The primary structure comprises 631 residues: uncharacterized protein (631 aa).

A signal peptide spans 1-20 (MVRFVSILSLFGCAATLVTA). At 21–105 (HDDMDMDMDM…AGNRSALRYH (85 aa)) the chain is on the lumenal side. Residues asparagine 87 and asparagine 98 are each glycosylated (N-linked (GlcNAc...) asparagine). Residues 106–126 (IITLLLVAFVLYPVSLALSAA) form a helical membrane-spanning segment. At 127–131 (RSRWY) the chain is on the cytoplasmic side. The chain crosses the membrane as a helical span at residues 132–152 (LPLLFVNLCICISSVMALSVF). Over 153 to 170 (KNTFPEEDWYAHNIYGTT) the chain is Lumenal. The helical transmembrane segment at 171 to 191 (SVLLLVFMLVHFFAAVLSVPV) threads the bilayer. Residues 192 to 322 (SLASKKEYRP…LSCVANVVFH (131 aa)) lie on the Cytoplasmic side of the membrane. The interval 216–274 (MVNSARGSPSPSSNRDTLFSLSSDTTTATATNNNKRRRAEGEDEGDNTSNHDTLRDEDY) is disordered. Serine 219 is modified (phosphoserine). Residues 220 to 239 (ARGSPSPSSNRDTLFSLSSD) are compositionally biased toward polar residues. Residue lysine 250 forms a Glycyl lysine isopeptide (Lys-Gly) (interchain with G-Cter in ubiquitin) linkage. Residues 323–343 (MLTYPLFMYIFVDLIIGFAVG) traverse the membrane as a helical segment. Over 344 to 351 (NLLGKGIR) the chain is Lumenal. The chain crosses the membrane as a helical span at residues 352-372 (IFNLLAHWIKGGVFFTLGVVS). Residues 373 to 407 (LARYCGFAAKYGWAWNNISFTSQLTQTRSSNLLFR) are Cytoplasmic-facing. A helical transmembrane segment spans residues 408–428 (FAPAGTFTMEFVESFLIFFYG). Topologically, residues 429–451 (STNIFLEHLAGNGGAWTAKDLQH) are lumenal. A helical membrane pass occupies residues 452–472 (VSIAFMFIGTGLCGLLTEYKL). Topologically, residues 473 to 529 (NHWRFEHARKRPQTDVVAATPGYSPNPFPAFTIFWTGILMSQHAQSSQFSTTIHTQW) are cytoplasmic. Residues 530–550 (GYLLSYGSFFRLLTFLILFLV) form a helical membrane-spanning segment. Topologically, residues 551-598 (PNTNSAASKPFTELITSFCLLCGGLVFMESTDQSIEAMEYRGFTPMFT) are lumenal. Residues 599–619 (FNLSVGFVSLLMAWEMILFIW) traverse the membrane as a helical segment. Residues 620 to 631 (KDWLIKTRKTSL) lie on the Cytoplasmic side of the membrane.

This sequence to S.pombe SpBC3B8.06.

Its subcellular location is the membrane. This is an uncharacterized protein from Saccharomyces cerevisiae (strain ATCC 204508 / S288c) (Baker's yeast).